Reading from the N-terminus, the 495-residue chain is Internal alternative NAD(P)H-ubiquinone oxidoreductase A1, mitochondrial (495 aa).

A mitochondrion-targeting transit peptide spans 1–41 (MPWFKNLIKISKTITNQSSSYKSITPLASPLLAQFLQFTKQ). FAD is bound at residue 61-91 (RIVVLGSGWAGCRLMKDIDTNIYDVVCVSPR). Position 228-264 (228-264 (LHCVVVGGGPTGVEFSGELSDFILKDVHQRYAHVKDY)) interacts with NAD(+). The Microbody targeting signal motif lies at 486–495 (LVFGRDISRI).

This sequence belongs to the NADH dehydrogenase family. The cofactor is FAD.

It localises to the mitochondrion inner membrane. It is found in the peroxisome. It catalyses the reaction a quinone + NADH + H(+) = a quinol + NAD(+). The catalysed reaction is a ubiquinone + NADH + H(+) = a ubiquinol + NAD(+). Functionally, alternative NADH-ubiquinone oxidoreductase which catalyzes the oxidation of mitochondrial NADH does not translocate protons across the inner mitochondrial membrane. The chain is Internal alternative NAD(P)H-ubiquinone oxidoreductase A1, mitochondrial (NDA1) from Solanum tuberosum (Potato).